The sequence spans 1245 residues: Structural polyprotein (1245 aa).

The interval 1–106 (MNRGFFNMLG…KPKPGKRQRM (106 aa)) is disordered. The interval 37–70 (GLASQIQQLTTAVSALVIGQATRPQPPRPRPPPR) is host transcription inhibition. Over residues 38 to 49 (LASQIQQLTTAV) the composition is skewed to polar residues. The Nuclear localization signal signature appears at 63–100 (PRPRPPPRQKKQAPKQPPKPKKPKTQEKKKKQPAKPKP). Positions 67-106 (PPPRQKKQAPKQPPKPKKPKTQEKKKKQPAKPKPGKRQRM) are enriched in basic residues. The binding to the viral RNA stretch occupies residues 86 to 115 (KTQEKKKKQPAKPKPGKRQRMALKLEADRL). The ribosome-binding stretch occupies residues 100 to 114 (PGKRQRMALKLEADR). Positions 114-264 (RLFDVKNEDG…KTTPEGTEEW (151 aa)) constitute a Peptidase S3 domain. His141 serves as the catalytic Charge relay system. Residues 146–156 (IDHPVLSKLKF) carry the Nuclear export signal motif. An interaction with spike glycoprotein E2 region spans residues 157 to 162 (TKSSAY). Asp163 serves as the catalytic Charge relay system. A dimerization of the capsid protein region spans residues 185–195 (PEGFYNWHHGA). Catalysis depends on Ser215, which acts as the Charge relay system. The interval 221–225 (DNSGR) is dimerization of the capsid protein. The interaction with spike glycoprotein E2 stretch occupies residues 249 to 253 (SKGKT). A functions as an uncleaved signal peptide for the precursor of protein E3/E2 region spans residues 265-279 (SAAPLVTAMCLLGNV). Asn278 is a glycosylation site (N-linked (GlcNAc...) asparagine; by host). Cystine bridges form between Cys283–Cys289, Cys480–Cys594, Cys529–Cys554, and Cys531–Cys548. Residues 329 to 690 (SVIDDFTLTS…HEIVQHYYHR (362 aa)) are Extracellular-facing. Asn524 carries an N-linked (GlcNAc...) asparagine; by host glycan. Asn646 is a glycosylation site (N-linked (GlcNAc...) asparagine; by host). Residues 682 to 730 (EIVQHYYHRHPVYTILAVASATVAMMIGVTVAVLCACKARRECLTPYAL) adopt a coiled-coil conformation. Residues 691–718 (HPVYTILAVASATVAMMIGVTVAVLCAC) form a helical membrane-spanning segment. Positions 719-723 (KARRE) are interaction with the capsid protein. Over 719-751 (KARRECLTPYALAPNAVIPTSLALLCCVRSANA) the chain is Cytoplasmic. S-palmitoyl cysteine; by host attachment occurs at residues Cys724, Cys744, and Cys745. Residues Cys724 and Cys745 are joined by a disulfide bond. The Extracellular portion of the chain corresponds to 752-763 (ETFTETMSYLWS). Residues 764-784 (NSQPFFWVQLCIPLAAFIVLM) form a helical membrane-spanning segment. A topological domain (cytoplasmic) is located at residue Arg785. A helical transmembrane segment spans residues 786–806 (CCSCCLPFLVVAGAYLAKVDA). At 807 to 1214 (YEHATTVPNV…QAAISKTSWS (408 aa)) the chain is on the extracellular side. 4 disulfides stabilise this stretch: Cys855-Cys920, Cys868-Cys900, Cys869-Cys902, and Cys874-Cys884. The segment at 890–907 (VYPFMWGGAQCFCDSENS) is E1 fusion peptide loop. Asn945 and Asn1051 each carry an N-linked (GlcNAc...) asparagine; by host glycan. 4 cysteine pairs are disulfide-bonded: Cys1065–Cys1077, Cys1107–Cys1182, Cys1112–Cys1186, and Cys1134–Cys1176. The stretch at 1196–1245 (TPHKNDQEFQAAISKTSWSWLFALFGGASSLLIIGLMIFACSMMLTSTRR) forms a coiled coil. A helical transmembrane segment spans residues 1215–1239 (WLFALFGGASSLLIIGLMIFACSMM). Topologically, residues 1240 to 1245 (LTSTRR) are cytoplasmic.

Belongs to the alphavirus structural polyprotein family. In terms of assembly, homomultimer. Interacts with host karyopherin KPNA4; this interaction allows the nuclear import of the viral capsid protein. Interacts with spike glycoprotein E2. Interacts with host IRAK1; the interaction leads to inhibition of IRAK1-dependent signaling. The precursor of protein E3/E2 and E1 form a heterodimer shortly after synthesis. As to quaternary structure, the precursor of protein E3/E2 and E1 form a heterodimer shortly after synthesis. Processing of the precursor of protein E3/E2 into E2 and E3 results in a heterodimer of the spike glycoproteins E2 and E1. Spike at virion surface are constituted of a trimer of E2-E1 heterodimers. After target cell attachment and endocytosis, E1 change conformation to form homotrimers. E2-E1 heterodimers interact with host VLDLR or LRP8/APOER2 to mediate viral entry. Interacts with 6K protein. In terms of assembly, interacts with spike glycoprotein E1. Processing of the precursor of protein E3/E2 into E2 and E3 results in a heterodimer of the spike glycoproteins E2 and E1. Spike at virion surface are constituted of a trimer of E2-E1 heterodimers. E2-E1 heterodimers interact with host VLDLR or LRP8/APOER2 to mediate viral entry. Interacts with 6K protein. Interacts with the capsid protein. Oligomer. Interacts with spike glycoprotein E1. Interacts with spike glycoprotein E2. In terms of processing, specific enzymatic cleavages in vivo yield mature proteins. Capsid protein is auto-cleaved during polyprotein translation, unmasking a signal peptide at the N-terminus of the precursor of E3/E2. The remaining polyprotein is then targeted to the host endoplasmic reticulum, where host signal peptidase cleaves it into pE2, 6K and E1 proteins. pE2 is further processed to mature E3 and E2 by host furin in trans-Golgi vesicle. Palmitoylated via thioester bonds. These palmitoylations may induce disruption of the C-terminus transmembrane. This would result in the reorientation of E2 C-terminus from lumenal to cytoplasmic side. Post-translationally, N-glycosylated. In terms of processing, palmitoylated via thioester bonds.

Its subcellular location is the virion. The protein localises to the host cytoplasm. It localises to the host cell membrane. It is found in the host nucleus. The protein resides in the virion membrane. Its subcellular location is the host Golgi apparatus. The protein localises to the host trans-Golgi network. It localises to the host endoplasmic reticulum. It carries out the reaction Autocatalytic release of the core protein from the N-terminus of the togavirus structural polyprotein by hydrolysis of a -Trp-|-Ser- bond.. With respect to regulation, the channel activity is blocked by 5-N, N-Hexamethylene amiloride. Its function is as follows. Forms an icosahedral capsid with a T=4 symmetry composed of 240 copies of the capsid protein surrounded by a lipid membrane through which penetrate 80 spikes composed of trimers of E1-E2 heterodimers. The capsid protein binds to the viral RNA genome at a site adjacent to a ribosome binding site for viral genome translation following genome release. Possesses a protease activity that results in its autocatalytic cleavage from the nascent structural protein. Following its self-cleavage, the capsid protein transiently associates with ribosomes, and within several minutes the protein binds to viral RNA and rapidly assembles into icosahedric core particles. The resulting nucleocapsid eventually associates with the cytoplasmic domain of the spike glycoprotein E2 at the cell membrane, leading to budding and formation of mature virions. In case of infection, new virions attach to target cells and after clathrin-mediated endocytosis their membrane fuses with the host endosomal membrane. This leads to the release of the nucleocapsid into the cytoplasm, followed by an uncoating event necessary for the genomic RNA to become accessible. The uncoating might be triggered by the interaction of capsid proteins with ribosomes. Binding of ribosomes would release the genomic RNA since the same region is genomic RNA-binding and ribosome-binding. Specifically inhibits interleukin-1 receptor-associated kinase 1/IRAK1-dependent signaling during viral entry, representing a means by which the alphaviruses may evade innate immune detection and activation prior to viral gene expression. In terms of biological role, provides the signal sequence for the translocation of the precursor of protein E3/E2 to the host endoplasmic reticulum. Furin-cleaved E3 remains associated with spike glycoprotein E1 and mediates pH protection of the latter during the transport via the secretory pathway. After virion release from the host cell, the assembly protein E3 is gradually released in the extracellular space. Functionally, plays a role in viral attachment to target host cell, by binding to the cell receptors VLDLR or LRP8/APOER2. Synthesized as a pE2 precursor which is processed by furin at the cell membrane just before virion budding, giving rise to E2-E1 heterodimer. The pE2-E1 heterodimer is stable, whereas E2-E1 is unstable and dissociate at low pH. pE2 is processed at the last step, presumably to avoid E1 fusion activation before its final export to cell surface. E2 C-terminus contains a transitory transmembrane that would be disrupted by palmitoylation, resulting in reorientation of the C-terminal tail from lumenal to cytoplasmic side. This step is critical since E2 C-terminus is involved in budding by interacting with capsid proteins. This release of E2 C-terminus in cytoplasm occurs lately in protein export, and precludes premature assembly of particles at the endoplasmic reticulum membrane. Acts as a viroporin that participates in virus glycoprotein processing and transport to the plasma membrane, cell permeabilization and budding of viral particles. Disrupts the calcium homeostasis of the cell, probably at the endoplasmic reticulum level resulting in the increased levels of cytoplasmic calcium. Because of its lipophilic properties, the 6K protein is postulated to influence the selection of lipids that interact with the transmembrane domains of the glycoproteins, which, in turn, affects the deformability of the bilayer required for the extreme curvature that occurs as budding proceeds. Present in low amount in virions, about 3% compared to viral glycoproteins. Its function is as follows. Class II viral fusion protein. Fusion activity is inactive as long as E1 is bound to E2 in mature virion. After virus attachment to target cell via host VLDLR or LRP8/APOER2 and endocytosis, acidification of the endosome induces dissociation of E1/E2 heterodimer and concomitant trimerization of the E1 subunits. This E1 trimer is fusion active, and promotes release of viral nucleocapsid in cytoplasm after endosome and viral membrane fusion. Efficient fusion requires the presence of cholesterol and sphingolipid in the target membrane. The sequence is that of Structural polyprotein from Acrocephalus scirpaceus (Eurasian reed-warbler).